The following is a 317-amino-acid chain: Olfactory receptor 2F1 (317 aa).

Topologically, residues M1–R24 are extracellular. N5 carries an N-linked (GlcNAc...) asparagine glycan. Residues V25–L48 form a helical membrane-spanning segment. The Cytoplasmic segment spans residues I49–T57. A helical transmembrane segment spans residues P58 to P79. Residues Q80–Q100 are Extracellular-facing. Cysteines 97 and 189 form a disulfide. Residues L101 to Y120 form a helical membrane-spanning segment. Residues D121 to G139 are Cytoplasmic-facing. The helical transmembrane segment at L140–T160 threads the bilayer. The Extracellular portion of the chain corresponds to A161–M200. The helical transmembrane segment at V201–I222 threads the bilayer. Over S223–K236 the chain is Cytoplasmic. The chain crosses the membrane as a helical span at residues A237–Q261. The Extracellular portion of the chain corresponds to P262–K272. A helical transmembrane segment spans residues L273–L292. Over R293–T317 the chain is Cytoplasmic.

Belongs to the G-protein coupled receptor 1 family.

The protein localises to the cell membrane. In terms of biological role, odorant receptor. This chain is Olfactory receptor 2F1 (OR2F1), found in Homo sapiens (Human).